Consider the following 84-residue polypeptide: Large ribosomal subunit protein uL29 (84 aa).

The protein belongs to the universal ribosomal protein uL29 family.

In Mycoplasma mobile (strain ATCC 43663 / 163K / NCTC 11711) (Mesomycoplasma mobile), this protein is Large ribosomal subunit protein uL29.